The chain runs to 89 residues: Small ribosomal subunit protein uS15 (89 aa).

This sequence belongs to the universal ribosomal protein uS15 family. As to quaternary structure, part of the 30S ribosomal subunit. Forms a bridge to the 50S subunit in the 70S ribosome, contacting the 23S rRNA.

Functionally, one of the primary rRNA binding proteins, it binds directly to 16S rRNA where it helps nucleate assembly of the platform of the 30S subunit by binding and bridging several RNA helices of the 16S rRNA. Its function is as follows. Forms an intersubunit bridge (bridge B4) with the 23S rRNA of the 50S subunit in the ribosome. The sequence is that of Small ribosomal subunit protein uS15 from Azoarcus sp. (strain BH72).